The primary structure comprises 244 residues: Flavin-dependent thymidylate synthase (244 aa).

The ThyX domain maps to 2–207 (VRVTLVNYTK…DIRPIIKWAK (206 aa)). FAD contacts are provided by residues serine 56, 80–82 (RHR), and glutamine 88. Residues 77-80 (QLVR), 88-92 (QQSQR), and arginine 146 each bind dUMP. Positions 80 to 90 (RHRIASYTQQS) match the ThyX motif motif. FAD contacts are provided by residues 162–164 (NLR) and histidine 168. Arginine 173 contributes to the dUMP binding site. Arginine 173 serves as the catalytic Involved in ionization of N3 of dUMP, leading to its activation.

This sequence belongs to the thymidylate synthase ThyX family. As to quaternary structure, homotetramer. FAD serves as cofactor.

It carries out the reaction dUMP + (6R)-5,10-methylene-5,6,7,8-tetrahydrofolate + NADPH + H(+) = dTMP + (6S)-5,6,7,8-tetrahydrofolate + NADP(+). It functions in the pathway pyrimidine metabolism; dTTP biosynthesis. Functionally, catalyzes the reductive methylation of 2'-deoxyuridine-5'-monophosphate (dUMP) to 2'-deoxythymidine-5'-monophosphate (dTMP) while utilizing 5,10-methylenetetrahydrofolate (mTHF) as the methyl donor, and NADPH and FADH(2) as the reductant. The protein is Flavin-dependent thymidylate synthase of Pyrococcus furiosus (strain ATCC 43587 / DSM 3638 / JCM 8422 / Vc1).